Consider the following 402-residue polypeptide: Serine/threonine transporter SstT (402 aa).

Transmembrane regions (helical) follow at residues 17 to 37 (IAIGVVIGAILGLLIPKITVI), 44 to 64 (FVGGLKAIAPLLVSALVANAL), 79 to 99 (IVLYLFGTFAAALTAVISHYI), 138 to 158 (ALSQANYIGVLVWAVVFGFAM), 179 to 199 (IVRWIINLAPFGILGLVFDTI), 212 to 232 (VLILVLVGTMTFVALVINPII), 295 to 315 (MAGAAVTINVLTLAAVTTLGI), and 336 to 356 (ASGIAGGSLLLVPVACSLFGI).

Belongs to the dicarboxylate/amino acid:cation symporter (DAACS) (TC 2.A.23) family.

Its subcellular location is the cell membrane. The enzyme catalyses L-serine(in) + Na(+)(in) = L-serine(out) + Na(+)(out). It carries out the reaction L-threonine(in) + Na(+)(in) = L-threonine(out) + Na(+)(out). Functionally, involved in the import of serine and threonine into the cell, with the concomitant import of sodium (symport system). This Streptococcus thermophilus (strain ATCC BAA-491 / LMD-9) protein is Serine/threonine transporter SstT.